The chain runs to 168 residues: Protein GRE1 (168 aa).

The disordered stretch occupies residues 1-168 (MSNLLNKFAD…DDDSGNQGVW (168 aa)). Basic and acidic residues-rich tracts occupy residues 8 to 20 (FADK…HDER) and 27 to 43 (DQTR…REFR). 2 stretches are compositionally biased toward polar residues: residues 56–81 (NQGN…GNDF) and 120–144 (TSGQ…SNIG).

It localises to the cytoplasm. The sequence is that of Protein GRE1 (GRE1) from Saccharomyces cerevisiae (strain ATCC 204508 / S288c) (Baker's yeast).